The following is a 65-amino-acid chain: MPKLKTRKAAARRFKATGSGKIKRRKAFKSHLLEHKSSTRKNNLSKTTLVHKTNEENVRLMIPYL.

The tract at residues 1 to 28 is disordered; the sequence is MPKLKTRKAAARRFKATGSGKIKRRKAF.

It belongs to the bacterial ribosomal protein bL35 family.

This chain is Large ribosomal subunit protein bL35, found in Trichodesmium erythraeum (strain IMS101).